The chain runs to 186 residues: MKLFVGLGNPGKEYEQTRHNVGFFVIDELAKRWNVSLKTAKFRGLFGTASVSGEKVALCKPLTYMNLSGECVRPLMDYYDIAIDDVIVIYDDLDLPPGKIRLRLKGSSGGHNGVKSLIHHLGTEQFKRIRIGIGRPAGGQPVTDYVLGRFTEEEKPAVDKAVLRAADACEQAVKAPFIQVMNDFNE.

Position 14 (Y14) interacts with tRNA. Catalysis depends on H19, which acts as the Proton acceptor. 3 residues coordinate tRNA: Y64, N66, and N112.

This sequence belongs to the PTH family. As to quaternary structure, monomer.

The protein localises to the cytoplasm. It carries out the reaction an N-acyl-L-alpha-aminoacyl-tRNA + H2O = an N-acyl-L-amino acid + a tRNA + H(+). In terms of biological role, hydrolyzes ribosome-free peptidyl-tRNAs (with 1 or more amino acids incorporated), which drop off the ribosome during protein synthesis, or as a result of ribosome stalling. Functionally, catalyzes the release of premature peptidyl moieties from peptidyl-tRNA molecules trapped in stalled 50S ribosomal subunits, and thus maintains levels of free tRNAs and 50S ribosomes. The chain is Peptidyl-tRNA hydrolase from Geobacillus kaustophilus (strain HTA426).